The chain runs to 481 residues: Proline--tRNA ligase (481 aa).

It belongs to the class-II aminoacyl-tRNA synthetase family. ProS type 3 subfamily. In terms of assembly, homodimer.

Its subcellular location is the cytoplasm. It catalyses the reaction tRNA(Pro) + L-proline + ATP = L-prolyl-tRNA(Pro) + AMP + diphosphate. Catalyzes the attachment of proline to tRNA(Pro) in a two-step reaction: proline is first activated by ATP to form Pro-AMP and then transferred to the acceptor end of tRNA(Pro). The chain is Proline--tRNA ligase from Prosthecochloris aestuarii (strain DSM 271 / SK 413).